The chain runs to 1089 residues: Importin subunit beta-3 (1089 aa).

Residue S2 is modified to N-acetylserine. HEAT repeat units follow at residues 6–39, 44–78, 96–129, 138–165, 175–207, 216–252, 260–295, 304–359, 361–395, 399–439, 441–481, 484–524, 526–568, 571–613, 615–689, 692–735, 742–781, 788–849, 852–890, 898–930, 938–978, 986–1017, 1028–1063, and 1066–1089; these read EEVN…EEWI, IEYL…ALKA, KEVL…IAEC, PELL…ILTT, INSI…YFKQ, LGIL…LVEL, MFDQ…FSEN, QNYG…ALKL, GEYL…SSAA, ADVL…STDF, PFIQ…FSEF, KDIL…AEAA, NKFI…GFAV, EKFH…CRIL, DDFV…ATLL, QFAV…LLAA, ELVL…IKVM, EDQL…LKTT, HYLK…IQYG, KNAF…CAQY, VCIP…LYAY, DTYT…QLIE, NISA…LLGF, and SSDA…KWFA. A Phosphothreonine modification is found at T830.

This sequence belongs to the importin beta family. Importin beta-3 subfamily. In terms of assembly, interacts with Ran (GSP1); interacts specifically with the GTP-bound form of Ran (GTP-Ran), protecting it from GTP hydrolysis and nucleotide exchange. Interacts with RPL25; this interaction is dissociated by binding to Ran-GTP. Interacts with YAP1; this interaction is dissociated by binding to Ran-GTP. Interacts with NOP1; via its rg-NLS. Interacts with SOF1; via its cNLS. Interacts with histones H3 and H4; via their NLS. Interacts with ABF1.

The protein resides in the cytoplasm. The protein localises to the nucleus. In terms of biological role, functions in nuclear protein import as nuclear transport receptor. Serves as receptor for classical and arginine/glycine-rich nuclear localization signals (cNLS and rg-NLS) in cargo substrates. Its predominant cargo substrate seems to be ribosomal proteins and ribosome biogenesis trans- and cis-acting factors. Required for nuclear transport of YAP1, NOP1 and SOF1. Mediates the nuclear import of histones H3 and H4. Mediates docking of the importin/substrate complex to the nuclear pore complex (NPC) through binding to repeat-containing nucleoporins. The complex is subsequently translocated through the pore by an energy requiring, Ran-dependent mechanism. At the nucleoplasmic side of the NPC, GTP-Ran binding leads to release of the cargo. The importin is re-exported from the nucleus to the cytoplasm where GTP hydrolysis releases Ran from importin. The directionality of nuclear import is thought to be conferred by an asymmetric distribution of the GTP- and GDP-bound forms of Ran between the cytoplasm and nucleus. Its function is as follows. Plays a role in protein secretion. The polypeptide is Importin subunit beta-3 (Saccharomyces cerevisiae (strain ATCC 204508 / S288c) (Baker's yeast)).